A 538-amino-acid chain; its full sequence is Syncytin-2 (538 aa).

Positions 1 to 15 are cleaved as a signal peptide; the sequence is MGLLLLVLILTPSLA. The Extracellular portion of the chain corresponds to 16-478; that stretch reads AYRHPDFPLL…GWLNWEGTWK (463 aa). The CXXC signature appears at 43–46; that stretch reads CWLC. 3 cysteine pairs are disulfide-bonded: C43–C46, C43–C439, and C431–C438. 8 N-linked (GlcNAc...) asparagine glycosylation sites follow: N133, N146, N177, N220, N241, N247, N312, and N332. The segment at 354 to 374 is fusion peptide; sequence FIPLLAGLGILAGTGTGIAGI. The CKS-17 motif lies at 414–430; sequence LQNRRGLDMLTAAQGGI. Residues 431–439 carry the CX6CC motif; the sequence is CLALDEKCC. N-linked (GlcNAc...) asparagine glycosylation occurs at N443. The chain crosses the membrane as a helical span at residues 479–499; the sequence is WFSWVLPLTGPLVSLLLLLLF. The Cytoplasmic segment spans residues 500–538; it reads GPCLLNLITQFVSSRLQAIKLQTNLSAGRHPRNIQESPF.

The protein belongs to the gamma type-C retroviral envelope protein family. HERV class-I FRD env subfamily. As to quaternary structure, the surface and transmembrane proteins form a heterodimer. They are attached by non-covalent interactions or by a labile interchain disulfide bond. In terms of processing, specific enzymatic cleavages in vivo yield the mature SU and TM proteins. The CXXC motif is highly conserved across a broad range of retroviral envelope proteins. It is thought to participate in the formation of a labile disulfide bond possibly with the CX6CC motif present in the transmembrane protein.

It localises to the virion. Its subcellular location is the cell membrane. Its function is as follows. This endogenous retroviral envelope protein has retained its original fusogenic properties and participates in trophoblast fusion and the formation of a syncytium during placenta morphogenesis. The interaction with MFSD2A is apparently important for this process. Endogenous envelope proteins may have kept, lost or modified their original function during evolution but this one can still make pseudotypes with MLV, HIV-1 or SIV-1 virions and confer infectivity. Retroviral envelope proteins mediate receptor recognition and membrane fusion during early infection. The surface protein mediates receptor recognition, while the transmembrane protein anchors the envelope heterodimer to the viral membrane through one transmembrane domain. The other hydrophobic domain, called fusion peptide, mediates fusion of the viral membrane with the target cell membrane. The polypeptide is Syncytin-2 (ERVFRD-1) (Pan troglodytes (Chimpanzee)).